The primary structure comprises 243 residues: 4-phosphopantoate--beta-alanine ligase (243 aa).

ATP-binding positions include Arg15, Arg37, 176–178 (DLN), and 182–183 (RT).

This sequence belongs to the archaeal phosphopantothenate synthetase family. As to quaternary structure, homodimer.

The enzyme catalyses (R)-4-phosphopantoate + beta-alanine + ATP = (R)-4'-phosphopantothenate + AMP + diphosphate + H(+). It participates in cofactor biosynthesis; coenzyme A biosynthesis. Functionally, catalyzes the condensation of (R)-4-phosphopantoate and beta-alanine to 4'-phosphopantothenate in the CoA biosynthesis pathway. This is 4-phosphopantoate--beta-alanine ligase from Methanospirillum hungatei JF-1 (strain ATCC 27890 / DSM 864 / NBRC 100397 / JF-1).